A 404-amino-acid chain; its full sequence is Acetate kinase (404 aa).

Residue Asn7 coordinates Mg(2+). Lys14 provides a ligand contact to ATP. Arg91 is a substrate binding site. Asp148 functions as the Proton donor/acceptor in the catalytic mechanism. ATP is bound by residues 208–212 (HLGNG) and 283–285 (DLR). Residue Glu388 coordinates Mg(2+).

This sequence belongs to the acetokinase family. As to quaternary structure, homodimer. The cofactor is Mg(2+). Requires Mn(2+) as cofactor.

Its subcellular location is the cytoplasm. The enzyme catalyses acetate + ATP = acetyl phosphate + ADP. The protein operates within metabolic intermediate biosynthesis; acetyl-CoA biosynthesis; acetyl-CoA from acetate: step 1/2. In terms of biological role, catalyzes the formation of acetyl phosphate from acetate and ATP. Can also catalyze the reverse reaction. This chain is Acetate kinase, found in Borrelia turicatae (strain 91E135).